Reading from the N-terminus, the 549-residue chain is Limonene dehydrogenase subunit B (549 aa).

The protein belongs to the carotenoid/retinoid oxidoreductase family. As to quaternary structure, heterodimer composed of CtmA and CtmB. It depends on FAD as a cofactor.

The protein resides in the cytoplasm. The enzyme catalyses (4S)-limonene + A + H2O = (4S)-perillyl alcohol + AH2. The catalysed reaction is (4R)-limonene + A + H2O = (4R)-perillyl alcohol + AH2. Its pathway is terpene metabolism; monoterpene degradation. With respect to regulation, the presence of molecular oxygen causes a 40% reduction in specific activity. Functionally, involved in the degradation of the cyclic monoterpene limonene. Catalyzes the oxidation of limonene at the primary methyl group, forming perillyl alcohol. Hydroxylates the R- and S-enantiomers to their respective enantiomeric form of perillyl alcohol at a similar rate. Native CtmAB oxidizes a wide range of monocyclic monoterpenes containing the allylic methyl group motif (1-methyl-cyclohex-1-ene). Can also catalyze the reverse reaction, the reduction of perillyl alcohol to limonene, but with lower efficiency. Cannot use molecular oxygen as an electron acceptor. The natural electron acceptor is likely a heterodimeric electron transfer flavoprotein (ETF). This Castellaniella defragrans (strain DSM 12143 / CCUG 39792 / 65Phen) (Alcaligenes defragrans) protein is Limonene dehydrogenase subunit B.